The sequence spans 360 residues: Type 2 DNA topoisomerase 6 subunit A (360 aa).

Residues E3–A140 form the Topo IIA-type catalytic domain. The O-(5'-phospho-DNA)-tyrosine intermediate role is filled by Y97. The Mg(2+) site is built by E193 and D245.

It belongs to the TOP6A family. Homodimer. Heterotetramer of two Top6A and two Top6B chains. Mg(2+) is required as a cofactor.

It carries out the reaction ATP-dependent breakage, passage and rejoining of double-stranded DNA.. Its function is as follows. Relaxes both positive and negative superturns and exhibits a strong decatenase activity. The protein is Type 2 DNA topoisomerase 6 subunit A of Archaeoglobus fulgidus (strain ATCC 49558 / DSM 4304 / JCM 9628 / NBRC 100126 / VC-16).